The sequence spans 690 residues: UvrABC system protein B (690 aa).

The Helicase ATP-binding domain occupies 30-188 (QGVMDGQTNQ…QELISLHFVR (159 aa)). 43-50 (GVTGSGKT) serves as a coordination point for ATP. The Beta-hairpin motif lies at 96 to 119 (YYDFYQPEAYIPTMDKYIAKDLKI). The 167-residue stretch at 435 to 601 (QIDDLLEEIR…SIVKSVDQVL (167 aa)) folds into the Helicase C-terminal domain. A UVR domain is found at 641–676 (YAMAEELRLEMQEAAESMEFEKAAYLRDEVTKLEDA).

The protein belongs to the UvrB family. Forms a heterotetramer with UvrA during the search for lesions. Interacts with UvrC in an incision complex.

It is found in the cytoplasm. Its function is as follows. The UvrABC repair system catalyzes the recognition and processing of DNA lesions. A damage recognition complex composed of 2 UvrA and 2 UvrB subunits scans DNA for abnormalities. Upon binding of the UvrA(2)B(2) complex to a putative damaged site, the DNA wraps around one UvrB monomer. DNA wrap is dependent on ATP binding by UvrB and probably causes local melting of the DNA helix, facilitating insertion of UvrB beta-hairpin between the DNA strands. Then UvrB probes one DNA strand for the presence of a lesion. If a lesion is found the UvrA subunits dissociate and the UvrB-DNA preincision complex is formed. This complex is subsequently bound by UvrC and the second UvrB is released. If no lesion is found, the DNA wraps around the other UvrB subunit that will check the other stand for damage. The protein is UvrABC system protein B of Chlorobium phaeobacteroides (strain BS1).